We begin with the raw amino-acid sequence, 214 residues long: Thymidylate kinase (214 aa).

10-17 (GIDGCGKT) provides a ligand contact to ATP.

Belongs to the thymidylate kinase family.

The catalysed reaction is dTMP + ATP = dTDP + ADP. Functionally, phosphorylation of dTMP to form dTDP in both de novo and salvage pathways of dTTP synthesis. This chain is Thymidylate kinase, found in Prochlorococcus marinus subsp. pastoris (strain CCMP1986 / NIES-2087 / MED4).